We begin with the raw amino-acid sequence, 356 residues long: Phosphoribosyl pyrophosphate synthase-associated protein 1 (356 aa).

At Met-1 the chain carries N-acetylmethionine. A phosphoserine mark is found at Ser-177 and Ser-215.

Belongs to the ribose-phosphate pyrophosphokinase family. As to quaternary structure, binds to PRPS1 and PRPS2.

Functionally, seems to play a negative regulatory role in 5-phosphoribose 1-diphosphate synthesis. The polypeptide is Phosphoribosyl pyrophosphate synthase-associated protein 1 (PRPSAP1) (Bos taurus (Bovine)).